A 382-amino-acid polypeptide reads, in one-letter code: Galactokinase (382 aa).

Residue Glu-34 to Asp-37 coordinates substrate. Gly-124–Ser-130 contributes to the ATP binding site. 2 residues coordinate Mg(2+): Ser-130 and Glu-162. The Proton acceptor role is filled by Asp-174. Tyr-223 is a binding site for substrate.

It belongs to the GHMP kinase family. GalK subfamily.

It localises to the cytoplasm. It catalyses the reaction alpha-D-galactose + ATP = alpha-D-galactose 1-phosphate + ADP + H(+). It participates in carbohydrate metabolism; galactose metabolism. Catalyzes the transfer of the gamma-phosphate of ATP to D-galactose to form alpha-D-galactose-1-phosphate (Gal-1-P). In Escherichia coli O81 (strain ED1a), this protein is Galactokinase.